A 330-amino-acid chain; its full sequence is Ribosomal RNA small subunit methyltransferase H (330 aa).

Residues 50-52 (GGH), Asp-69, Leu-103, Asp-117, and Gln-124 each bind S-adenosyl-L-methionine.

This sequence belongs to the methyltransferase superfamily. RsmH family.

It localises to the cytoplasm. The enzyme catalyses cytidine(1402) in 16S rRNA + S-adenosyl-L-methionine = N(4)-methylcytidine(1402) in 16S rRNA + S-adenosyl-L-homocysteine + H(+). In terms of biological role, specifically methylates the N4 position of cytidine in position 1402 (C1402) of 16S rRNA. This Saccharopolyspora erythraea (strain ATCC 11635 / DSM 40517 / JCM 4748 / NBRC 13426 / NCIMB 8594 / NRRL 2338) protein is Ribosomal RNA small subunit methyltransferase H.